A 332-amino-acid chain; its full sequence is Adenine deaminase (332 aa).

Zn(2+)-binding residues include histidine 16, histidine 18, and histidine 196. Glutamate 199 acts as the Proton donor in catalysis. Position 277 (aspartate 277) interacts with Zn(2+). Aspartate 278 provides a ligand contact to substrate.

Belongs to the metallo-dependent hydrolases superfamily. Adenosine and AMP deaminases family. Adenine deaminase type 2 subfamily. It depends on Zn(2+) as a cofactor.

It carries out the reaction adenine + H2O + H(+) = hypoxanthine + NH4(+). Functionally, catalyzes the hydrolytic deamination of adenine to hypoxanthine. Plays an important role in the purine salvage pathway and in nitrogen catabolism. This is Adenine deaminase from Acinetobacter baylyi (strain ATCC 33305 / BD413 / ADP1).